The following is a 154-amino-acid chain: Myoglobin (154 aa).

The region spanning 2 to 148 (GLSDGEWQLV…FRNDIAAKYK (147 aa)) is the Globin domain. Ser-4 bears the Phosphoserine mark. His-65 contributes to the nitrite binding site. His-65 contributes to the O2 binding site. Thr-68 bears the Phosphothreonine mark. His-94 serves as a coordination point for heme b.

It belongs to the globin family. As to quaternary structure, monomeric.

Its subcellular location is the cytoplasm. The protein localises to the sarcoplasm. The enzyme catalyses Fe(III)-heme b-[protein] + nitric oxide + H2O = Fe(II)-heme b-[protein] + nitrite + 2 H(+). The catalysed reaction is H2O2 + AH2 = A + 2 H2O. Monomeric heme protein which primary function is to store oxygen and facilitate its diffusion within muscle tissues. Reversibly binds oxygen through a pentacoordinated heme iron and enables its timely and efficient release as needed during periods of heightened demand. Depending on the oxidative conditions of tissues and cells, and in addition to its ability to bind oxygen, it also has a nitrite reductase activity whereby it regulates the production of bioactive nitric oxide. Under stress conditions, like hypoxia and anoxia, it also protects cells against reactive oxygen species thanks to its pseudoperoxidase activity. The chain is Myoglobin (MB) from Tupaia glis (Common tree shrew).